A 133-amino-acid chain; its full sequence is Small ribosomal subunit protein uS8 (133 aa).

This sequence belongs to the universal ribosomal protein uS8 family. In terms of assembly, part of the 30S ribosomal subunit. Contacts proteins S5 and S12.

Its function is as follows. One of the primary rRNA binding proteins, it binds directly to 16S rRNA central domain where it helps coordinate assembly of the platform of the 30S subunit. The protein is Small ribosomal subunit protein uS8 of Chlamydia trachomatis serovar A (strain ATCC VR-571B / DSM 19440 / HAR-13).